The sequence spans 324 residues: Acetyl-coenzyme A carboxylase carboxyl transferase subunit alpha (324 aa).

Positions 37 to 291 (ILEEKLENLE…DLMIRKTFEQ (255 aa)) constitute a CoA carboxyltransferase C-terminal domain.

This sequence belongs to the AccA family. As to quaternary structure, acetyl-CoA carboxylase is a heterohexamer composed of biotin carboxyl carrier protein (AccB), biotin carboxylase (AccC) and two subunits each of ACCase subunit alpha (AccA) and ACCase subunit beta (AccD).

The protein localises to the cytoplasm. The enzyme catalyses N(6)-carboxybiotinyl-L-lysyl-[protein] + acetyl-CoA = N(6)-biotinyl-L-lysyl-[protein] + malonyl-CoA. Its pathway is lipid metabolism; malonyl-CoA biosynthesis; malonyl-CoA from acetyl-CoA: step 1/1. Its function is as follows. Component of the acetyl coenzyme A carboxylase (ACC) complex. First, biotin carboxylase catalyzes the carboxylation of biotin on its carrier protein (BCCP) and then the CO(2) group is transferred by the carboxyltransferase to acetyl-CoA to form malonyl-CoA. This Bacillus cereus (strain B4264) protein is Acetyl-coenzyme A carboxylase carboxyl transferase subunit alpha.